Consider the following 358-residue polypeptide: Probable tartrate dehydrogenase/decarboxylase TtuC' (358 aa).

Mn(2+)-binding residues include Asp-222, Asp-246, and Asp-250.

Belongs to the isocitrate and isopropylmalate dehydrogenases family. Mg(2+) serves as cofactor. Mn(2+) is required as a cofactor. The cofactor is K(+).

The protein localises to the cytoplasm. It catalyses the reaction tartrate + NAD(+) = 2-hydroxy-3-oxosuccinate + NADH + H(+). It carries out the reaction (2R,3S)-tartrate + NAD(+) = 2-hydroxy-3-oxosuccinate + NADH + H(+). The catalysed reaction is (2R,3R)-tartrate + NAD(+) = 2-hydroxy-3-oxosuccinate + NADH + H(+). The enzyme catalyses (2R,3R)-tartrate + H(+) = (R)-glycerate + CO2. It catalyses the reaction (R)-malate + NAD(+) = pyruvate + CO2 + NADH. Its pathway is carbohydrate acid metabolism; tartrate degradation; 2-hydroxy-3-oxosuccinate from L-tartrate: step 1/1. It participates in carbohydrate acid metabolism; tartrate degradation; 2-hydroxy-3-oxosuccinate from meso-tartrate: step 1/1. It functions in the pathway carbohydrate acid metabolism; tartrate degradation; D-glycerate from L-tartrate: step 1/1. Its function is as follows. Has multiple catalytic activities. Apart from catalyzing the oxidation of (+)-tartrate to oxaloglycolate, also converts meso-tartrate to D-glycerate and catalyzes the oxidative decarboxylation of D-malate to pyruvate. In Agrobacterium vitis (Rhizobium vitis), this protein is Probable tartrate dehydrogenase/decarboxylase TtuC' (ttuC').